The chain runs to 141 residues: Hemoglobin subunit alpha (141 aa).

One can recognise a Globin domain in the interval 1-141 (VLSAADKTNV…VSTVLTSKYR (141 aa)). Residue Ser3 is modified to Phosphoserine. Lys7 carries the N6-succinyllysine modification. The residue at position 8 (Thr8) is a Phosphothreonine. Lys11 is modified (N6-succinyllysine). At Lys16 the chain carries N6-acetyllysine; alternate. Lys16 carries the post-translational modification N6-succinyllysine; alternate. Position 35 is a phosphoserine (Ser35). An N6-succinyllysine modification is found at Lys40. A Phosphoserine modification is found at Ser49. His58 lines the O2 pocket. A heme b-binding site is contributed by His87. Position 102 is a phosphoserine (Ser102). Position 108 is a phosphothreonine (Thr108). Residues Ser124 and Ser131 each carry the phosphoserine modification. Phosphothreonine is present on residues Thr134 and Thr137. Ser138 carries the phosphoserine modification.

The protein belongs to the globin family. In terms of assembly, heterotetramer of two alpha chains and two beta chains. Red blood cells.

In terms of biological role, involved in oxygen transport from the lung to the various peripheral tissues. The protein is Hemoglobin subunit alpha of Sciurus carolinensis (Eastern gray squirrel).